Reading from the N-terminus, the 339-residue chain is Serpentine receptor class delta-32 (339 aa).

7 consecutive transmembrane segments (helical) span residues 14–34, 45–65, 94–114, 128–148, 188–208, 237–257, and 269–289; these read AAVVSTLGIIFNGFLLFLIFF, VFLANTSITQLGYCICFLLTV, IFTTMLHFAVNSFLSIMLSMV, SGAFAMCILAYMIPLSMVVSI, LWVACCVSILCIPIYSVMFWC, ALTVQSLIPVFTLFPASLIFL, and FGYIIISLLSLSPTIDPLVTI.

This sequence belongs to the nematode receptor-like protein srd family.

The protein localises to the membrane. This chain is Serpentine receptor class delta-32 (srd-32), found in Caenorhabditis elegans.